The chain runs to 92 residues: Small ribosomal subunit protein uS19 (92 aa).

Belongs to the universal ribosomal protein uS19 family.

Protein S19 forms a complex with S13 that binds strongly to the 16S ribosomal RNA. This chain is Small ribosomal subunit protein uS19, found in Variovorax paradoxus (strain S110).